Reading from the N-terminus, the 160-residue chain is S-ribosylhomocysteine lyase (160 aa).

Residues His-57, His-61, and Cys-127 each contribute to the Fe cation site.

This sequence belongs to the LuxS family. As to quaternary structure, homodimer. Requires Fe cation as cofactor.

It catalyses the reaction S-(5-deoxy-D-ribos-5-yl)-L-homocysteine = (S)-4,5-dihydroxypentane-2,3-dione + L-homocysteine. Functionally, involved in the synthesis of autoinducer 2 (AI-2) which is secreted by bacteria and is used to communicate both the cell density and the metabolic potential of the environment. The regulation of gene expression in response to changes in cell density is called quorum sensing. Catalyzes the transformation of S-ribosylhomocysteine (RHC) to homocysteine (HC) and 4,5-dihydroxy-2,3-pentadione (DPD). This Streptococcus suis (strain 98HAH33) protein is S-ribosylhomocysteine lyase.